A 361-amino-acid polypeptide reads, in one-letter code: 5-formaminoimidazole-4-carboxamide-1-(beta)-D-ribofuranosyl 5'-monophosphate synthetase (361 aa).

The 5-amino-1-(5-phospho-beta-D-ribosyl)imidazole-4-carboxamide site is built by histidine 27 and serine 94. The ATP-grasp domain maps to 116–348 (RAILRWEAER…MGQRIAKEIK (233 aa)). ATP-binding positions include 146–208 (PDDI…ANYC) and glutamate 230. Asparagine 258 provides a ligand contact to 5-amino-1-(5-phospho-beta-D-ribosyl)imidazole-4-carboxamide. Residues glutamine 297 and glutamate 310 each coordinate Mg(2+).

The protein belongs to the phosphohexose mutase family. Mg(2+) is required as a cofactor. The cofactor is Mn(2+).

The enzyme catalyses 5-amino-1-(5-phospho-beta-D-ribosyl)imidazole-4-carboxamide + formate + ATP = 5-formamido-1-(5-phospho-D-ribosyl)imidazole-4-carboxamide + ADP + phosphate. Its pathway is purine metabolism; IMP biosynthesis via de novo pathway; 5-formamido-1-(5-phospho-D-ribosyl)imidazole-4-carboxamide from 5-amino-1-(5-phospho-D-ribosyl)imidazole-4-carboxamide (formate route): step 1/1. Catalyzes the ATP- and formate-dependent formylation of 5-aminoimidazole-4-carboxamide-1-beta-d-ribofuranosyl 5'-monophosphate (AICAR) to 5-formaminoimidazole-4-carboxamide-1-beta-d-ribofuranosyl 5'-monophosphate (FAICAR) in the absence of folates. This chain is 5-formaminoimidazole-4-carboxamide-1-(beta)-D-ribofuranosyl 5'-monophosphate synthetase, found in Methanococcus maripaludis (strain C6 / ATCC BAA-1332).